A 296-amino-acid chain; its full sequence is Heme oxygenase 1 (296 aa).

Residues 1 to 273 (METSQPHNAE…RMQADMLTTS (273 aa)) are Cytoplasmic-facing. Heme b contacts are provided by K21, H28, Y137, and R186. Residues 231–264 (GHAVQPKAELRTRSVNKSHENSPAAGKESERTSR) are disordered. Positions 238–250 (AELRTRSVNKSHE) are enriched in basic and acidic residues. A helical; Anchor for type IV membrane protein membrane pass occupies residues 274 to 296 (PLVRWLLALGFIATTVAVGLFAM).

The protein belongs to the heme oxygenase family. In terms of assembly, homodimer and higher order homooligomer. Oligomerization is crucial for its stability and function in the endoplasmic reticulum. A soluble form arises by proteolytic removal of the membrane anchor.

It localises to the endoplasmic reticulum membrane. The catalysed reaction is heme b + 3 reduced [NADPH--hemoprotein reductase] + 3 O2 = biliverdin IXalpha + CO + Fe(2+) + 3 oxidized [NADPH--hemoprotein reductase] + 3 H2O + H(+). Its activity is regulated as follows. Inhibited by metalloporphyrins in the following order of decreasing potency: tin mesoporphyrin &gt; tin protoporphyrin &gt; zinc protoporphyrin &gt; manganese protoporphyrin &gt; cobalt protoporphyrin. In terms of biological role, catalyzes the oxidative cleavage of heme at the alpha-methene bridge carbon, released as carbon monoxide (CO), to generate biliverdin IXalpha, while releasing the central heme iron chelate as ferrous iron. Affords protection against programmed cell death and this cytoprotective effect relies on its ability to catabolize free heme and prevent it from sensitizing cells to undergo apoptosis. Functionally, catalyzes the oxidative cleavage of heme at the alpha-methene bridge carbon, released as carbon monoxide (CO), to generate biliverdin IXalpha, while releasing the central heme iron chelate as ferrous iron. The chain is Heme oxygenase 1 (HMOX1) from Gallus gallus (Chicken).